An 853-amino-acid polypeptide reads, in one-letter code: FIGNL1-interacting regulator of recombination and mitosis (853 aa).

A phosphoserine; by PLK1 mark is found at S43 and S744. K792 bears the N6-acetyllysine mark.

Interacts (via its N-terminal region) with PLK1; controls PLK1 kinase activity. Interacts (via the KVVXF motif) with PPP1CC; controls PLK1 kinase activity. Interacts with FIGNL1; may regulate homologous recombination. Post-translationally, phosphorylation at Ser-43 by PLK1 strengthens FIRRM-PLK1 interaction. Phosphorylation at Ser-744 by PLK1 negatively regulates its interaction with PPP1CC.

The protein localises to the chromosome. The protein resides in the centromere. It localises to the kinetochore. Its subcellular location is the nucleus. It is found in the midbody. The protein localises to the cytoplasm. The protein resides in the cytoskeleton. It localises to the spindle. Its function is as follows. Regulates PLK1 kinase activity at kinetochores and promotes faithful chromosome segregation in prometaphase by bridging kinase and phosphatase activities. Phosphorylation of FIRRM by PLK1 negatively regulates its interaction with the phosphatase, PPP1CC, thus creating a negative feedback loop for maintaining proper PLK1 kinase activity during mitosis. In complex with FIGL1 may regulate homologous recombination. In Homo sapiens (Human), this protein is FIGNL1-interacting regulator of recombination and mitosis.